The following is a 198-amino-acid chain: Nucleoplasmin (198 aa).

The tract at residues 35-38 (SDED) is acidic tract A1. Positions 125–145 (SWAEEEGEEEVEEEEEEEDPE) are enriched in acidic residues. The disordered stretch occupies residues 125–198 (SWAEEEGEEE…GRGRKPAAKK (74 aa)). Positions 128-145 (EEEGEEEVEEEEEEEDPE) are acidic tract A2. Basic residues predominate over residues 150–167 (AVKRPAASKKGSQAKKKK). A Bipartite nuclear localization signal motif is present at residues 152 to 167 (KRPAASKKGSQAKKKK). The interval 172–174 (EEE) is acidic tract A3. The span at 183–198 (KKGKGAGRGRKPAAKK) shows a compositional bias: basic residues.

It belongs to the nucleoplasmin family. Homopentamer. As to expression, expressed in oocytes.

The protein resides in the nucleus. Its function is as follows. Acts as a chaperone for histones, such as histone H2A-H2B, and thus regulates the assembly of nucleosome cores. Involved in chromatin remodeling, especially during fertilization and early embryonic development. May be involved in sperm chromatin decondensation during fertilization. The polypeptide is Nucleoplasmin (Rhinella marina (Cane toad)).